The chain runs to 437 residues: Glutamate-1-semialdehyde 2,1-aminomutase (437 aa).

Lysine 273 carries the post-translational modification N6-(pyridoxal phosphate)lysine.

The protein belongs to the class-III pyridoxal-phosphate-dependent aminotransferase family. HemL subfamily. In terms of assembly, homodimer. Pyridoxal 5'-phosphate serves as cofactor.

The protein localises to the cytoplasm. It carries out the reaction (S)-4-amino-5-oxopentanoate = 5-aminolevulinate. It participates in porphyrin-containing compound metabolism; protoporphyrin-IX biosynthesis; 5-aminolevulinate from L-glutamyl-tRNA(Glu): step 2/2. In Chlamydia caviae (strain ATCC VR-813 / DSM 19441 / 03DC25 / GPIC) (Chlamydophila caviae), this protein is Glutamate-1-semialdehyde 2,1-aminomutase.